The sequence spans 205 residues: NADH-quinone oxidoreductase subunit J (205 aa).

5 consecutive transmembrane segments (helical) span residues 1-21 (MPIF…CVVL), 26-46 (VYSV…MILL), 54-74 (LLIV…IMML), 89-109 (LSLS…TIIL), and 142-162 (FMLP…SCIT).

Belongs to the complex I subunit 6 family.

The protein resides in the cell membrane. It catalyses the reaction a quinone + NADH + 5 H(+)(in) = a quinol + NAD(+) + 4 H(+)(out). NDH-1 shuttles electrons from NADH, via FMN and iron-sulfur (Fe-S) centers, to quinones in the respiratory chain. Couples the redox reaction to proton translocation (for every two electrons transferred, four hydrogen ions are translocated across the cytoplasmic membrane), and thus conserves the redox energy in a proton gradient. The protein is NADH-quinone oxidoreductase subunit J (nuoJ) of Rickettsia prowazekii (strain Madrid E).